Here is a 269-residue protein sequence, read N- to C-terminus: Formamidopyrimidine-DNA glycosylase (269 aa).

Proline 2 serves as the catalytic Schiff-base intermediate with DNA. Catalysis depends on glutamate 3, which acts as the Proton donor. The active-site Proton donor; for beta-elimination activity is lysine 57. The DNA site is built by histidine 90, arginine 109, and arginine 150. The FPG-type zinc-finger motif lies at 235–269 (NVYGRKGEPCEACGKAIESKVIGQRNTFFCTRCQR). Arginine 259 serves as the catalytic Proton donor; for delta-elimination activity.

This sequence belongs to the FPG family. As to quaternary structure, monomer. Requires Zn(2+) as cofactor.

It carries out the reaction Hydrolysis of DNA containing ring-opened 7-methylguanine residues, releasing 2,6-diamino-4-hydroxy-5-(N-methyl)formamidopyrimidine.. It catalyses the reaction 2'-deoxyribonucleotide-(2'-deoxyribose 5'-phosphate)-2'-deoxyribonucleotide-DNA = a 3'-end 2'-deoxyribonucleotide-(2,3-dehydro-2,3-deoxyribose 5'-phosphate)-DNA + a 5'-end 5'-phospho-2'-deoxyribonucleoside-DNA + H(+). In terms of biological role, involved in base excision repair of DNA damaged by oxidation or by mutagenic agents. Acts as a DNA glycosylase that recognizes and removes damaged bases. Has a preference for oxidized purines, such as 7,8-dihydro-8-oxoguanine (8-oxoG). Has AP (apurinic/apyrimidinic) lyase activity and introduces nicks in the DNA strand. Cleaves the DNA backbone by beta-delta elimination to generate a single-strand break at the site of the removed base with both 3'- and 5'-phosphates. In Alteromonas mediterranea (strain DSM 17117 / CIP 110805 / LMG 28347 / Deep ecotype), this protein is Formamidopyrimidine-DNA glycosylase.